The sequence spans 178 residues: Adenine phosphoribosyltransferase (178 aa).

The protein belongs to the purine/pyrimidine phosphoribosyltransferase family. Homodimer.

Its subcellular location is the cytoplasm. It catalyses the reaction AMP + diphosphate = 5-phospho-alpha-D-ribose 1-diphosphate + adenine. It participates in purine metabolism; AMP biosynthesis via salvage pathway; AMP from adenine: step 1/1. Catalyzes a salvage reaction resulting in the formation of AMP, that is energically less costly than de novo synthesis. The polypeptide is Adenine phosphoribosyltransferase (Cereibacter sphaeroides (strain ATCC 17025 / ATH 2.4.3) (Rhodobacter sphaeroides)).